The primary structure comprises 722 residues: ORC ubiquitin ligase 1 (722 aa).

The RING-type; degenerate zinc finger occupies 18–56; sequence CHICLGKVRQPVVCTNNHVFCSICIDLWLKNNSQCPACR. 2 coiled-coil regions span residues 87–129 and 157–267; these read LRKT…TILD and VVEW…KEDV. S210 is subject to Phosphoserine. The disordered stretch occupies residues 273–359; the sequence is RAPSADSKGP…RLGARETPMD (87 aa). A compositionally biased stretch (low complexity) spans 302–319; sequence AGSASASHLASPSSSRLA. Positions 323–338 are enriched in polar residues; that stretch reads SVRQESTSRTEPNCPQ. The segment covering 339–359 has biased composition (basic and acidic residues); the sequence is NKDRYPKPTEPRLGARETPMD. A phosphoserine mark is found at S522, S549, S557, S564, and S566. Polar residues predominate over residues 541 to 555; sequence MSESDNSKSPCNNGF. 2 disordered regions span residues 541–585 and 691–722; these read MSES…GSKL and VPEKRSKNGNQSTKRKIQSSLANASPSKATKS. Residues 571 to 581 are compositionally biased toward basic and acidic residues; that stretch reads EFLEEPDKLQE. Residues 698–722 show a composition bias toward polar residues; it reads NGNQSTKRKIQSSLANASPSKATKS. Phosphoserine occurs at positions 715 and 717.

In terms of assembly, associates with ORC complex. Binds to chromatin; association is cell cycle-regulated, absent from mitotic chromosomes, is associated with chromatin from G1 and partially released from chromatin from mid S-phase. In terms of processing, auto-ubiquitinated.

It is found in the chromosome. It carries out the reaction S-ubiquitinyl-[E2 ubiquitin-conjugating enzyme]-L-cysteine + [acceptor protein]-L-lysine = [E2 ubiquitin-conjugating enzyme]-L-cysteine + N(6)-ubiquitinyl-[acceptor protein]-L-lysine.. Functionally, E3 ubiquitin ligase essential for DNA replication origin activation during S phase. Acts as a replication origin selector which selects the origins to be fired and catalyzes the multi-mono-ubiquitination of a subset of chromatin-bound ORC3 and ORC5 during S-phase. In Mus musculus (Mouse), this protein is ORC ubiquitin ligase 1.